The sequence spans 238 residues: Probable transcriptional regulatory protein VPA0011 (238 aa).

It belongs to the TACO1 family.

The protein localises to the cytoplasm. The chain is Probable transcriptional regulatory protein VPA0011 from Vibrio parahaemolyticus serotype O3:K6 (strain RIMD 2210633).